The primary structure comprises 83 residues: uncharacterized protein (83 aa).

A signal peptide spans 1 to 20 (MRRALTLAVLATCAVLPALA).

This sequence to P.denitrificans and M.extorquens MoxJ.

This is an uncharacterized protein from Paracoccus denitrificans.